The sequence spans 251 residues: MTRRKKIYEGKAKILYEGPEPGTLIQYFKDDTTAFDATKKAVLEGKGVINNRISEYIMTKLNSIGVQNHFIKRLNLREQLIREVEIIPLEVVCRNVAAGSLSKRFGLPEGQALPRSIIEFYLKDDKLHDPMVAEEHITAFNWASTQEIDDMMALTLRVNDFLTGLFSGVGITLVDFKIEFGRIWENDFSRIILADEISPDSCRLWDSQTNEKLDKDRFRRDLGNVIESYTEVARRLGIMKEMPTVIQGGLH.

The protein belongs to the SAICAR synthetase family.

It catalyses the reaction 5-amino-1-(5-phospho-D-ribosyl)imidazole-4-carboxylate + L-aspartate + ATP = (2S)-2-[5-amino-1-(5-phospho-beta-D-ribosyl)imidazole-4-carboxamido]succinate + ADP + phosphate + 2 H(+). It functions in the pathway purine metabolism; IMP biosynthesis via de novo pathway; 5-amino-1-(5-phospho-D-ribosyl)imidazole-4-carboxamide from 5-amino-1-(5-phospho-D-ribosyl)imidazole-4-carboxylate: step 1/2. The chain is Phosphoribosylaminoimidazole-succinocarboxamide synthase from Phenylobacterium zucineum (strain HLK1).